A 908-amino-acid chain; its full sequence is MAEAFVSFGLEKLWDLLSRESERLQGIDGQLDGLKRQLRSLQSLLKDADAKKHGSDRVRNFLEDVKDLVFDAEDIIESYVLNKLSGKGKGVKKHVRRLACFLTDRHKVASDIEGITKRISEVIGEMQSFGIQQIIDGGRSLSLQERQRVQREIRQTYPDSSESDLVGVEQSVKELVGHLVENDVHQVVSIAGMGGIGKTTLARQVFHHDLVRRHFDGFAWVCVSQQFTQKHVWQRILQELQPHDGDILQMDEYALQRKLFQLLEAGRYLVVLDDVWKKEDWDVIKAVFPRKRGWKMLLTSRNEGVGIHADPTCLTFRASILNPEESWKLCERIVFPRRDETEVRLDEEMEAMGKEMVTHCGGLPLAVKALGGLLANKHTVPEWKRVFDNIGSQIVGGSWLDDNSLNSVYRILSLSYEDLPTHLKHCFLNLAHFPEDSEISTYSLFYYWAAEGIYDGSTIEDSGEYYLEELVRRNLVIADDNYLSWQSKYCQMHDMMREVCLSKAKEENFLQIIIDPTCTSTINAQSPSRSRRLSIHSGKAFHILGHKNKTKVRSLIVPRFEEDYWIRSASVFHNLTLLRVLDLSWVKFEGGKLPCSIGGLIHLRYLSLYEAKVSHLPSTMRNLKLLLYLNLRVDTEEPIHVPNVLKEMIQLRYLSLPLKMDDKTKLELGDLVNLEYLYGFSTQHSSVTDLLRMTKLRYLAVSLSERCNFETLSSSLRELRNLETLNFLFSLETYMVDYMGEFVLDHFIHLKQLGLAVRMSKIPDQHQFPPHLVHLFLIYCGMEEDPMPILEKLLHLKSVRLARKAFLGSRMVCSKGGFPQLCVIEISKESELEEWIVEEGSMPCLRTLTIDDCKKLKELPDGLKYITSLKELKIEGMKREWKEKLVPGGEDYYKVQHIPDVQFINCDQ.

Residues 15-57 adopt a coiled-coil conformation; that stretch reads DLLSRESERLQGIDGQLDGLKRQLRSLQSLLKDADAKKHGSDR. One can recognise an NB-ARC domain in the interval 146–459; the sequence is RQRVQREIRQ…AEGIYDGSTI (314 aa). An ATP-binding site is contributed by 192-199; sequence GMGGIGKT. 9 LRR repeats span residues 575–600, 601–623, 648–673, 693–718, 722–746, 748–770, 793–820, 842–867, and 882–905; these read LTLLRVLDLSWVKFEGGKLPCSIGGL, IHLRYLSLYEAKVSHLPSTMRNL, MIQLRYLSLPLKMDDKTKLELGDLVN, MTKLRYLAVSLSERCNFETLSSSLRE, LETLNFLFSLETYMVDYMGEFVLDH, IHLKQLGLAVRMSKIPDQHQFPP, LLHLKSVRLARKAFLGSRMVCSKGGFPQ, MPCLRTLTIDDCKKLKELPDGLKYIT, and KEKLVPGGEDYYKVQHIPDVQFIN.

This sequence belongs to the disease resistance NB-LRR family. RPP8/HRT subfamily. As to quaternary structure, interacts with the NAC protein TIP. Interacts with MORC1/CRT1. Interacts with COP1 and is subsequently degraded in a 26s proteasome dependent manner. Mostly expressed in leaves, and, to a lower extent, in roots.

The protein resides in the cell membrane. In terms of biological role, disease resistance protein. Resistance proteins guard the plant against pathogens that contain an appropriate avirulence protein via an indirect interaction with this avirulence protein. That triggers a defense system including the hypersensitive response, which restricts the pathogen growth. The interaction with TIP (TCV-interacting protein) may be essential for the recognition of the avirulence proteins, and the triggering of the defense response. Triggers resistance to turnip crinkle virus (TCV) via a SAG101-dependent pathway. This chain is Disease resistance protein RPP8 (RPP8), found in Arabidopsis thaliana (Mouse-ear cress).